The following is a 492-amino-acid chain: GTPase Der (492 aa).

2 EngA-type G domains span residues 3–166 (PVVA…MDDV) and 205–378 (IKLA…DSST). Residues 9–16 (GRPNVGKS), 56–60 (DTGGI), 118–121 (NKTD), 211–218 (GRPNVGKS), 258–262 (DTAGV), and 323–326 (NKWD) contribute to the GTP site. Positions 379-463 (RRVSTALLTR…PIRIQFKEGA (85 aa)) constitute a KH-like domain.

Belongs to the TRAFAC class TrmE-Era-EngA-EngB-Septin-like GTPase superfamily. EngA (Der) GTPase family. In terms of assembly, associates with the 50S ribosomal subunit.

GTPase that plays an essential role in the late steps of ribosome biogenesis. The chain is GTPase Der from Cronobacter sakazakii (strain ATCC BAA-894) (Enterobacter sakazakii).